Reading from the N-terminus, the 86-residue chain is U15-lycotoxin-Ls1d (86 aa).

The signal sequence occupies residues 1-20 (MNSKIFAVLLLLALLSCVLS). A WAP domain is found at 21-66 (DQYCPKSSITACKKMNIRNDCCKDDDCTGGSWCCATPCGNFCKYPT). Disulfide bonds link cysteine 24/cysteine 54, cysteine 32/cysteine 58, cysteine 41/cysteine 53, cysteine 42/cysteine 80, and cysteine 47/cysteine 62.

This sequence belongs to the venom protein 11 family. 01 (wap-1) subfamily. Post-translationally, contains 5 disulfide bonds. As to expression, expressed by the venom gland.

It localises to the secreted. Functionally, has antibacterial activity. The sequence is that of U15-lycotoxin-Ls1d from Lycosa singoriensis (Wolf spider).